The following is a 55-amino-acid chain: Large ribosomal subunit protein bL33c (55 aa).

It belongs to the bacterial ribosomal protein bL33 family.

It localises to the plastid. The protein localises to the chloroplast. The sequence is that of Large ribosomal subunit protein bL33c from Emiliania huxleyi (Coccolithophore).